Consider the following 607-residue polypeptide: Major facilitator superfamily multidrug transporter mdrA (607 aa).

The next 12 membrane-spanning stretches (helical) occupy residues 77-97 (MTVAVSTLAVALVSSAYTGGV), 110-130 (VATLGVSLFVLGFAIGPLLWA), 139-159 (QIIFTVTYCALTAFNAGSAGA), 170-190 (FFAGAFGASPLTNAGGVIADM), 202-222 (LFAAAPFLGPVLGPIIGGFLG), 229-249 (WVMGFLGAFSGAVWIICTIFV), 305-325 (PIVFLLSLYMAIIYGTLYMLF), 342-362 (VSSLPFLGIMVGMMFAVTYSV), 385-405 (LPPTLIASVAIPIGLFWFAWT), 413-433 (IVCILAGAPFGFGMVLVFLGI), 443-463 (IFAASVLAANSVLRSIFGAVF), and 478-498 (WASSIPAFLALACVPFPFLFY). The interval 523–583 (EQMKQAPEPE…ASTRTASSLR (61 aa)) is disordered. Residues 553 to 564 (DVSETESNVEEL) are compositionally biased toward acidic residues. Residues 572-583 (SRASTRTASSLR) show a composition bias toward low complexity.

It belongs to the major facilitator superfamily. DHA1 family. Polyamines/proton antiporter (TC 2.A.1.2.16) subfamily.

It is found in the cell membrane. In terms of biological role, MFS transporter involved in the basal level of azole susceptibility. Confers resistance to voriconazole and, to a lesser extent, to fluconazole. This is Major facilitator superfamily multidrug transporter mdrA from Aspergillus fumigatus (strain ATCC MYA-4609 / CBS 101355 / FGSC A1100 / Af293) (Neosartorya fumigata).